We begin with the raw amino-acid sequence, 317 residues long: GTPase Era (317 aa).

The 174-residue stretch at 17–190 (RAGFACFVGR…ADLLTPLLPE (174 aa)) folds into the Era-type G domain. The interval 25-32 (GRPNAGKS) is G1. 25–32 (GRPNAGKS) lines the GTP pocket. The interval 51–55 (QTTRH) is G2. A G3 region spans residues 72–75 (DTPG). Residues 72-76 (DTPGL) and 135-138 (TKTD) each bind GTP. Residues 135–138 (TKTD) form a G4 region. Residues 169 to 171 (VSA) are G5. A KH type-2 domain is found at 221 to 303 (VRDELPHSIA…FLDLHVKVAK (83 aa)).

Belongs to the TRAFAC class TrmE-Era-EngA-EngB-Septin-like GTPase superfamily. Era GTPase family. In terms of assembly, monomer.

It localises to the cytoplasm. Its subcellular location is the cell membrane. Functionally, an essential GTPase that binds both GDP and GTP, with rapid nucleotide exchange. Plays a role in 16S rRNA processing and 30S ribosomal subunit biogenesis and possibly also in cell cycle regulation and energy metabolism. This Streptomyces coelicolor (strain ATCC BAA-471 / A3(2) / M145) protein is GTPase Era.